The sequence spans 193 residues: MNTYKNSLNHFLNLVDCLEKIPNVGKKSAFKMAYHLGLENPYLALKITHALRNALENLKTCASCNALSETEVSEICSDESRQNSQLCMVLHPRDVFILEDLKDFLGRYYVLNSIEDVDFNALEKRLIGENIKEIIFAFPPTLANDSLMLYIEDKLQHLHLTFTKIAQGVPTGVNFENIDSVSLSRAFNSRIKA.

The C4-type; degenerate zinc-finger motif lies at 61–76 (CASCNALSETEVSEIC). One can recognise a Toprim domain in the interval 84-170 (SQLCMVLHPR…TFTKIAQGVP (87 aa)).

Belongs to the RecR family.

Its function is as follows. May play a role in DNA repair. It seems to be involved in an RecBC-independent recombinational process of DNA repair. It may act with RecF and RecO. The protein is Recombination protein RecR of Helicobacter pylori (strain J99 / ATCC 700824) (Campylobacter pylori J99).